The sequence spans 202 residues: Keratin-associated protein 5-10 (202 aa).

7 repeat units span residues 48-51, 54-57, 144-147, 162-165, 172-175, 182-185, and 192-195. Positions 48–195 are 7 X 4 AA repeats of C-C-X-P; the sequence is CCKPVCCCVP…CCCQSSCCVP (148 aa).

The protein belongs to the KRTAP type 5 family. Interacts with hair keratins. Expressed in hair root but not in skin. Expressed also in brain and skeletal muscle.

Its function is as follows. In the hair cortex, hair keratin intermediate filaments are embedded in an interfilamentous matrix, consisting of hair keratin-associated protein (KRTAP), which are essential for the formation of a rigid and resistant hair shaft through their extensive disulfide bond cross-linking with abundant cysteine residues of hair keratins. The matrix proteins include the high-sulfur and high-glycine-tyrosine keratins. The polypeptide is Keratin-associated protein 5-10 (KRTAP5-10) (Homo sapiens (Human)).